We begin with the raw amino-acid sequence, 352 residues long: Pre-rRNA-processing protein ipi1 (352 aa).

This sequence belongs to the IPI1/TEX10 family. Component of the RIX1 complex, composed of rrm-9/ipi1, rix1/ipi2 and ipi3 in a 1:2:2 stoichiometry. The complex interacts (via rix1) with mdn1 (via its hexameric AAA ATPase ring) and the pre-60S ribosome particles.

It localises to the nucleus. Functionally, component of the RIX1 complex required for processing of ITS2 sequences from 35S pre-rRNA. This Neurospora crassa (strain ATCC 24698 / 74-OR23-1A / CBS 708.71 / DSM 1257 / FGSC 987) protein is Pre-rRNA-processing protein ipi1 (rrm-9).